Consider the following 441-residue polypeptide: 23S rRNA (uracil(1939)-C(5))-methyltransferase RlmD (441 aa).

Positions 1–56 (MSIDSLDMEARGVGRLLNEDGTPGKVIFVEGALPGETVSYRSFRRKPSYEQAHLVE) constitute a TRAM domain. [4Fe-4S] cluster-binding residues include Cys69, Cys75, Cys78, and Cys157. Residues Gln265, Phe294, Asn299, Glu315, Asn343, and Asp364 each contribute to the S-adenosyl-L-methionine site. Residue Cys397 is the Nucleophile of the active site.

The protein belongs to the class I-like SAM-binding methyltransferase superfamily. RNA M5U methyltransferase family. RlmD subfamily.

The catalysed reaction is uridine(1939) in 23S rRNA + S-adenosyl-L-methionine = 5-methyluridine(1939) in 23S rRNA + S-adenosyl-L-homocysteine + H(+). Its function is as follows. Catalyzes the formation of 5-methyl-uridine at position 1939 (m5U1939) in 23S rRNA. This is 23S rRNA (uracil(1939)-C(5))-methyltransferase RlmD from Cupriavidus necator (strain ATCC 17699 / DSM 428 / KCTC 22496 / NCIMB 10442 / H16 / Stanier 337) (Ralstonia eutropha).